The following is a 295-amino-acid chain: MRRLTDSFILGLAKGAVIPGLYTFRMTEGRSPLGQIGVLITVAISFLLTFKRFDPRFYKPIGDFKIVFLSLMAPKLPSLLSAVVMICLIFSEMRLRMILSRCVMIMPSYSPAVFTGIMVSLFFKSQMFDDYSVLITAASLLPITVRYGWMIRSSGFLLGLQKYRPILKSTSFREVDLKCLVKFTVEFLLLFTMLWIGKMFLSMPKSNHLFFLTVVNNVFFKLNVFKAAACAVVAILSGLMMNVCLYRIIFEAFVGLGFSSIMLTLSSDLKDRSFYAGDLLNGFFCLVVCCMYFGV.

The next 8 membrane-spanning stretches (helical) occupy residues 4–24 (LTDS…LYTF), 31–51 (SPLG…LTFK), 66–86 (IVFL…VVMI), 103–123 (VMIM…SLFF), 183–203 (FTVE…FLSM), 218–238 (VFFK…ILSG), 243–263 (VCLY…SIML), and 274–294 (FYAG…MYFG).

The protein localises to the membrane. In Human herpesvirus 6A (strain Uganda-1102) (HHV-6 variant A), this protein is Protein U26 (U26).